A 131-amino-acid polypeptide reads, in one-letter code: Methylglyoxal synthase (131 aa).

The 131-residue stretch at methionine 1–lysine 131 folds into the MGS-like domain. Substrate contacts are provided by residues histidine 8, lysine 12, threonine 34 to threonine 37, and serine 54 to glycine 55. The active-site Proton donor/acceptor is the aspartate 60. Histidine 87 is a binding site for substrate.

The protein belongs to the methylglyoxal synthase family.

The catalysed reaction is dihydroxyacetone phosphate = methylglyoxal + phosphate. Its function is as follows. Catalyzes the formation of methylglyoxal from dihydroxyacetone phosphate. In Bacillus anthracis (strain A0248), this protein is Methylglyoxal synthase.